Reading from the N-terminus, the 304-residue chain is Protein YIF1B (304 aa).

Residues 1–146 (MMEYPNQSGF…APRFDINAPD (146 aa)) are Cytoplasmic-facing. The interval 21-54 (MRGSAMEPSDPTQLFDDTSSGVNKHEPGRVGKSP) is disordered. Residues 30-42 (DPTQLFDDTSSGV) show a composition bias toward polar residues. A helical membrane pass occupies residues 147–167 (LYIPVMGFITYVLVAGLALGT). Residues 168–182 (QNRFSPEILGIQASS) lie on the Extracellular side of the membrane. Residues 183–203 (ALVWLIIEVLAVLLSLYLVTV) traverse the membrane as a helical segment. Residues 204-212 (NTDLTTIDL) are Cytoplasmic-facing. The helical transmembrane segment at 213–233 (VAFSGYKYVGMIVGVVAGLLF) threads the bilayer. Residues 234–236 (GRT) lie on the Extracellular side of the membrane. Residues 237-257 (GYYLALLWFCASIFVFTIRTL) form a helical membrane-spanning segment. At 258-282 (RLKILSEAAAEGRLVRGTKNQLRMY) the chain is on the cytoplasmic side. Residues 283–303 (LTMAIAAAQPVFMYWLTFHLV) traverse the membrane as a helical segment. Position 304 (Arg304) is a topological domain, extracellular.

It belongs to the YIF1 family.

It localises to the endoplasmic reticulum membrane. The protein resides in the golgi apparatus membrane. It is found in the endoplasmic reticulum-Golgi intermediate compartment membrane. Functionally, functions in endoplasmic reticulum to Golgi vesicle-mediated transport and regulates the proper organization of the endoplasmic reticulum and the Golgi. Plays a key role in targeting to neuronal dendrites receptors such as HTR1A. Plays also a role in primary cilium and sperm flagellum assembly probably through protein transport to these compartments. The protein is Protein YIF1B (yif1b) of Danio rerio (Zebrafish).